Reading from the N-terminus, the 206-residue chain is Holliday junction branch migration complex subunit RuvA (206 aa).

The tract at residues 1-67 is domain I; sequence MIASIFGKIT…QILEEGFAFN (67 aa). The tract at residues 68 to 141 is domain II; the sequence is TLEEKEWFSK…YDRDDGGKRI (74 aa). Residues 141 to 145 are flexible linker; it reads IKPNT. The tract at residues 146–206 is domain III; that stretch reads AMANDYDEMF…QNNEVTNKTA (61 aa).

Belongs to the RuvA family. As to quaternary structure, homotetramer. Forms an RuvA(8)-RuvB(12)-Holliday junction (HJ) complex. HJ DNA is sandwiched between 2 RuvA tetramers; dsDNA enters through RuvA and exits via RuvB. An RuvB hexamer assembles on each DNA strand where it exits the tetramer. Each RuvB hexamer is contacted by two RuvA subunits (via domain III) on 2 adjacent RuvB subunits; this complex drives branch migration. In the full resolvosome a probable DNA-RuvA(4)-RuvB(12)-RuvC(2) complex forms which resolves the HJ.

It localises to the cytoplasm. In terms of biological role, the RuvA-RuvB-RuvC complex processes Holliday junction (HJ) DNA during genetic recombination and DNA repair, while the RuvA-RuvB complex plays an important role in the rescue of blocked DNA replication forks via replication fork reversal (RFR). RuvA specifically binds to HJ cruciform DNA, conferring on it an open structure. The RuvB hexamer acts as an ATP-dependent pump, pulling dsDNA into and through the RuvAB complex. HJ branch migration allows RuvC to scan DNA until it finds its consensus sequence, where it cleaves and resolves the cruciform DNA. The protein is Holliday junction branch migration complex subunit RuvA of Mycoplasma pneumoniae (strain ATCC 29342 / M129 / Subtype 1) (Mycoplasmoides pneumoniae).